Here is a 236-residue protein sequence, read N- to C-terminus: uncharacterized protein (236 aa).

This sequence to M.tuberculosis Rv2557.

This is an uncharacterized protein from Mycobacterium tuberculosis (strain CDC 1551 / Oshkosh).